The sequence spans 159 residues: Probable metallophosphoesterase MPN_126 (159 aa).

Residues Asp-9, His-11, Asp-34, Asn-53, His-75, His-107, and His-109 each contribute to the Mn(2+) site.

The protein belongs to the metallophosphoesterase superfamily. YfcE family. It depends on Mn(2+) as a cofactor.

The sequence is that of Probable metallophosphoesterase MPN_126 from Mycoplasma pneumoniae (strain ATCC 29342 / M129 / Subtype 1) (Mycoplasmoides pneumoniae).